We begin with the raw amino-acid sequence, 226 residues long: UPF0758 protein SPs0978 (226 aa).

Residues 103–225 (SVLTSVQVAE…YYSFREKSTL (123 aa)) enclose the MPN domain. Zn(2+) contacts are provided by histidine 174, histidine 176, and aspartate 187. Residues 174-187 (HNHPSGNIEPSSND) carry the JAMM motif motif.

The protein belongs to the UPF0758 family.

This chain is UPF0758 protein SPs0978, found in Streptococcus pyogenes serotype M3 (strain SSI-1).